The sequence spans 72 residues: uncharacterized protein (72 aa).

Positions 51–72 (AKGGRQRGETVVVDDQCKEHKE) are disordered.

It belongs to the YiiE family.

This is an uncharacterized protein from Escherichia coli O6:K15:H31 (strain 536 / UPEC).